A 662-amino-acid polypeptide reads, in one-letter code: ATP-dependent RNA helicase DDX3X (662 aa).

At Ser-2 the chain carries N-acetylserine. The segment at 2–139 (SHVAVENALG…KSDEDDWSKP (138 aa)) is required for TBK1 and IKBKE-dependent IFNB1 activation. The Nuclear export signal signature appears at 12 to 21 (LDQQFAGLDL). Residues 19–144 (LDLNSSDNQS…DWSKPLPPSE (126 aa)) are disordered. Residues 21–34 (LNSSDNQSGGSTAS) are compositionally biased toward polar residues. The interval 38–44 (YIPPHLR) is interaction with EIF4E. Over residues 44 to 68 (RNREATKGFYDKDSSGWSSSKDKDA) the composition is skewed to basic and acidic residues. The residue at position 55 (Lys-55) is an N6-acetyllysine. The span at 70 to 89 (SSFGSRSDSRGKSSFFSDRG) shows a compositional bias: low complexity. The tract at residues 81-90 (KSSFFSDRGS) is interaction with VACV protein K7. A phosphoserine mark is found at Ser-82, Ser-86, and Ser-90. The segment at 88–123 (RGSGSRGRFDDRGRSDYDGIGSRGDRSGFGKFERGG) is involved in binding to RNA G-quadruplex. Residues 94–130 (GRFDDRGRSDYDGIGSRGDRSGFGKFERGGNSRWCDK) show a composition bias toward basic and acidic residues. Positions 100–110 (GRSDYDGIGSR) are interaction with IKBKE. The segment at 100–662 (GRSDYDGIGS…NSQGVDWWGN (563 aa)) is interaction with GSK3B. Arg-101 carries the omega-N-methylarginine modification. Ser-102 carries the post-translational modification Phosphoserine; by IKKE. At Tyr-104 the chain carries Phosphotyrosine. Arg-110 carries the post-translational modification Omega-N-methylarginine. Lys-118 carries the N6-acetyllysine modification. Ser-131 carries the post-translational modification Phosphoserine. The tract at residues 139 to 172 (PLPPSERLEQELFSGGNTGINFEKYDDIPVEATG) is interaction with CHUK. A Q motif motif is present at residues 180-208 (ESFSDVEMGEIIMGNIELTRYTRPTPVQK). Ser-181 is modified (phosphoserine; by TBK1; in vitro). Phosphoserine; by TBK1 is present on Ser-183. An ATP-binding site is contributed by 200–207 (YTRPTPVQ). Residues 211–403 (IPIIKEKRDL…RDFLDEYIFL (193 aa)) form the Helicase ATP-binding domain. Lys-215 participates in a covalent cross-link: Glycyl lysine isopeptide (Lys-Gly) (interchain with G-Cter in SUMO2). 224–231 (AQTGSGKT) lines the ATP pocket. Ser-240 is subject to Phosphoserine; by TBK1; in vitro. An involved in stimulation of ATPase activity by DNA and RNA, nucleic acid binding and unwinding and HIV-1 replication region spans residues 250–259 (ALRAMKENGR). The residue at position 269 (Ser-269) is a Phosphoserine; by TBK1; in vitro. The DEAD box signature appears at 347 to 350 (DEAD). Positions 409–662 (GSTSENITQK…NSQGVDWWGN (254 aa)) are interaction with HCV core protein. One can recognise a Helicase C-terminal domain in the interval 414-575 (NITQKVVWVE…EVPSWLENMA (162 aa)). At Ser-429 the chain carries Phosphoserine; by CSNK1E and TBK1; in vitro. Phosphothreonine; by TBK1; in vitro is present on Thr-438. Phosphoserine; by TBK1; in vitro occurs at positions 442 and 456. Position 469 is a phosphothreonine; by CSNK1E; in vitro (Thr-469). Phosphoserine; by CSNK1E; in vitro is present on Ser-470. Ser-520 is modified (phosphoserine; by TBK1; in vitro). The segment at 536 to 661 (GNLGLATSFF…YNSQGVDWWG (126 aa)) is interaction with NXF1. The residue at position 542 (Thr-542) is a Phosphothreonine; by TBK1; in vitro. Ser-543 carries the post-translational modification Phosphoserine; by CSNK1E and TBK1; in vitro. The residue at position 592 (Arg-592) is an Omega-N-methylarginine. A phosphoserine mark is found at Ser-594, Ser-605, and Ser-612. Positions 601 to 634 (DYRQSSGASSSSFSSSRASSSRSGGGGHGSSRGF) are disordered. A compositionally biased stretch (low complexity) spans 604 to 622 (QSSGASSSSFSSSRASSSR). Omega-N-methylarginine occurs at positions 617 and 632. The span at 623–634 (SGGGGHGSSRGF) shows a compositional bias: gly residues.

This sequence belongs to the DEAD box helicase family. DDX3/DED1 subfamily. Homodimer; can bind RNA as a monomer and as a dimer/oligomer. Interacts with TDRD3. Interacts (when phosphorylated at Ser-102) with IRF3; the interaction facilitates the phosphorylation and activation of IRF3 by IKBKE. Directly interacts with XPO1/CRM1. The interaction with XPO1/CMR1 is dependent on the DDX3X nuclear export signal motif and XPO1 interaction with GTPase RAN in its active GTP-bound form. Weakly interacts with TBKBP1/SINTBAD. Directly interacts with TRAF3; this interaction stimulates TRAF3 'Lys-63' ubiquitination. Interacts with CSNK1E in a Wnt-dependent manner; this interaction greatly enhances CSNK1E affinity for ATP, stimulates its kinase activity and promotes CSNK1E-mediated DVL2 phosphorylation. In the presence of RNA, the interaction is decreased. Also interacts with CSNK1D and stimulates its kinase activity. Interacts with TRPV4; this interaction is decreased when the TRPV4 channel is activated, leading to DDX3X relocalization to the nucleus. Interacts with MAP3K14/NIK. Directly interacts with CHUK/IKKA after physiological activation of the TLR7 and TLR8 pathways; this interaction enhances CHUK autophosphorylation. May associate with EIF4F complex, composed of at least EIF4A, EIF4E and EIF4G1/EIF4G3. Directly interacts with EIF4E in an RNA-independent manner; this interaction enhances EIF4E cap-binding ability. Directly interacts with EIF4G1 in an RNA-independent manner. DDX3X competes with EIF4G1 for interaction with EIF4E. Interacts with EIF4A1 and EIF2S1 in an RNA-independent manner. Associates with the eukaryotic translation initiation factor 3 (eIF-3) complex, including with EIF3B and EIF3C subunits. Directly interacts with IKBKE/IKKE; this interaction stimulates IKBKE activating autophosphorylation and is induced upon viral infection. Interacts with TBK1. Interacts with SP1; this interaction potentiates SP1-induced CDKN1A/WAF1/CIP1 transcription. Interacts with GSK3A and GSK3B. Interacts with several death receptors, inclusing FAS, TNFRSF10A and TNFRSF10B. Recruited to TNFRSF10B in the absence of receptor stimulation. When TNFRSF10B is stimulated, further recruited to the receptor and cleaved by caspases. A large proteolytic fragment remains associated with TNFRSF10B. Interacts (via C-terminus) with NXF1/TAP; this interaction may be partly involved in DDX3X nuclear export and in NXF1 localization to stress granules. Identified in an mRNP complex, composed of at least DHX9, DDX3X, ELAVL1, HNRNPU, IGF2BP1/2, ILF3, PABPC1, PCBP2, PTBP2, STAU1, STAU2, SYNCRIP and YBX1. The interaction with IGF2BP1/2 is RNA-dependent. Directly interacts with PABPC1/PABP1 in an RNA-independent manner. This interaction increases in stressed cells and decreases during cell recovery. Interacts (via C-terminus) with MAVS/IPS-1; this interaction occurs rapidly, but transiently after Sendai virus infection. The interaction potentiates MAVS-mediated IFNB induction. Interacts with ERCC6/CBS. Interacts with DHX33 in an RNA-independent manner. Interacts with DDX5 in the cytoplasm; this interaction may be more efficient when both proteins are unphosphorylated. Interacts with RIGI/RIG-1. Interacts with IFIH1/MDA5. Interacts with NCAPH; this interaction may be important for the NCAPH localization at condensing chromosomes during mitosis. Interacts with NLRP3 (via NACHT domain) under inflammasome-activating conditions. Interacts with CAPRIN1. Interacts with HNF4A and NR0B2/SHP in an RNA-independent manner; this interaction disrupts the interaction between HNF4 and NR0B2 that forms inactive heterodimers and enhances the formation of active HNF4 homodimers. Interacts with CREBBP/CBP. Interacts with EP300/p300. Interacts with gamma-tubulin. Interacts with phosphorylated TP53. Directly interacts with RELA/p65; this interaction may trap RELA in the cytoplasm, impairing nuclear relocalization upon TNF activating signals. In terms of assembly, (Microbial infection) Interacts with hepatitis B virus (HBV) polymerase in the cytoplasm; this interaction may inhibit DDX3X interaction with the IKBKE/TBK1 complex, and hence impair IKBKE/TBK1-mediated increase in IFNB production. As to quaternary structure, (Microbial infection) Directly interacts with hepatitis C virus (HCV) core protein in the cytoplasm. (Microbial infection) Interacts with vaccinia virus (VACV) protein K7. In terms of assembly, (Microbial infection) Interacts with HIV-1 protein Rev. As to quaternary structure, (Microbial infection) Interacts with Venezuelan equine encephalitis virus non-structural protein 3. Post-translationally, phosphorylated by TBK1; the phosphorylation is required for the synergistic induction of IFNB mediated by TBK1 and DDX3X. Phosphorylated by IKBKE at Ser-102 after ssRNA viral infection; enhances the induction of INFB promoter by IRF3. The cytoplasmic form is highly phosphorylated in the G1/S phase of the cell cycle and much less at G2/M. Phosphorylation by CSNK1E may inhibit RNA-stimulated ATPase activity. In terms of processing, upon stimulation of death receptors, including TNFRSF10B, recruited to receptors and cleaved by caspases. Proteolytic fragments remain associated with the receptors. This cleavage presumably inactivates DDX3X anti-apoptotic function. Ubiquitinated by RNF39 via 'Lys-48'-linked ubiquitination; leading to proteasomal degradation. Widely expressed. In testis, expressed in spermatids. Expressed in epidermis and liver (at protein level).

It is found in the cell membrane. Its subcellular location is the nucleus. The protein resides in the cytoplasm. It localises to the stress granule. The protein localises to the inflammasome. It is found in the cell projection. Its subcellular location is the lamellipodium. The protein resides in the cytoskeleton. It localises to the microtubule organizing center. The protein localises to the centrosome. It catalyses the reaction ATP + H2O = ADP + phosphate + H(+). In terms of biological role, multifunctional ATP-dependent RNA helicase. The ATPase activity can be stimulated by various ribo-and deoxynucleic acids indicative for a relaxed substrate specificity. In vitro can unwind partially double-stranded DNA with a preference for 5'-single-stranded DNA overhangs. Binds RNA G-quadruplex (rG4s) structures, including those located in the 5'-UTR of NRAS mRNA. Involved in many cellular processes, which do not necessarily require its ATPase/helicase catalytic activities. Involved in transcription regulation. Positively regulates CDKN1A/WAF1/CIP1 transcription in an SP1-dependent manner, hence inhibits cell growth. This function requires its ATPase, but not helicase activity. CDKN1A up-regulation may be cell-type specific. Binds CDH1/E-cadherin promoter and represses its transcription. Potentiates HNF4A-mediated MTTP transcriptional activation; this function requires ATPase, but not helicase activity. Facilitates HNF4A acetylation, possibly catalyzed by CREBBP/EP300, thereby increasing the DNA-binding affinity of HNF4 to its response element. In addition, disrupts the interaction between HNF4 and SHP that forms inactive heterodimers and enhances the formation of active HNF4 homodimers. By promoting HNF4A-induced MTTP expression, may play a role in lipid homeostasis. May positively regulate TP53 transcription. Associates with mRNPs, predominantly with spliced mRNAs carrying an exon junction complex (EJC). Involved in the regulation of translation initiation. Not involved in the general process of translation, but promotes efficient translation of selected complex mRNAs, containing highly structured 5'-untranslated regions (UTR). This function depends on helicase activity. Might facilitate translation by resolving secondary structures of 5'-UTRs during ribosome scanning. Alternatively, may act prior to 43S ribosomal scanning and promote 43S pre-initiation complex entry to mRNAs exhibiting specific RNA motifs, by performing local remodeling of transcript structures located close to the cap moiety. Independently of its ATPase activity, promotes the assembly of functional 80S ribosomes and disassembles from ribosomes prior to the translation elongation process. Positively regulates the translation of cyclin E1/CCNE1 mRNA and consequently promotes G1/S-phase transition during the cell cycle. May activate TP53 translation. Required for endoplasmic reticulum stress-induced ATF4 mRNA translation. Independently of its ATPase/helicase activity, enhances IRES-mediated translation; this activity requires interaction with EIF4E. Independently of its ATPase/helicase activity, has also been shown specifically repress cap-dependent translation, possibly by acting on translation initiation factor EIF4E. Involved in innate immunity, acting as a viral RNA sensor. Binds viral RNAs and promotes the production of type I interferon (IFN-alpha and IFN-beta). Potentiate MAVS/RIGI-mediated induction of IFNB in early stages of infection. Enhances IFNB1 expression via IRF3/IRF7 pathway and participates in NFKB activation in the presence of MAVS and TBK1. Involved in TBK1 and IKBKE-dependent IRF3 activation leading to IFNB induction, acts as a scaffolding adapter that links IKBKE and IRF3 and coordinates their activation. Involved in the TLR7/TLR8 signaling pathway leading to type I interferon induction, including IFNA4 production. In this context, acts as an upstream regulator of IRF7 activation by MAP3K14/NIK and CHUK/IKKA. Stimulates CHUK autophosphorylation and activation following physiological activation of the TLR7 and TLR8 pathways, leading to MAP3K14/CHUK-mediated activatory phosphorylation of IRF7. Also stimulates MAP3K14/CHUK-dependent NF-kappa-B signaling. Negatively regulates TNF-induced IL6 and IL8 expression, via the NF-kappa-B pathway. May act by interacting with RELA/p65 and trapping it in the cytoplasm. May also bind IFNB promoter; the function is independent of IRF3. Involved in both stress and inflammatory responses. Independently of its ATPase/helicase activity, required for efficient stress granule assembly through its interaction with EIF4E, hence promotes survival in stressed cells. Independently of its helicase activity, regulates NLRP3 inflammasome assembly through interaction with NLRP3 and hence promotes cell death by pyroptosis during inflammation. This function is independent of helicase activity. Therefore DDX3X availability may be used to interpret stress signals and choose between pro-survival stress granules and pyroptotic NLRP3 inflammasomes and serve as a live-or-die checkpoint in stressed cells. In association with GSK3A/B, negatively regulates extrinsic apoptotic signaling pathway via death domain receptors, including TNFRSF10B, slowing down the rate of CASP3 activation following death receptor stimulation. Cleavage by caspases may inactivate DDX3X and relieve the inhibition. Independently of its ATPase/helicase activity, allosteric activator of CSNK1E. Stimulates CSNK1E-mediated phosphorylation of DVL2, thereby involved in the positive regulation of Wnt/beta-catenin signaling pathway. Also activates CSNK1A1 and CSNK1D in vitro, but it is uncertain if these targets are physiologically relevant. ATPase and casein kinase-activating functions are mutually exclusive. May be involved in mitotic chromosome segregation. Functionally, (Microbial infection) Facilitates hepatitis C virus (HCV) replication. During infection, HCV core protein inhibits the interaction between MAVS and DDX3X and therefore impairs MAVS-dependent INFB induction and might recruit DDX3X to HCV replication complex. Its function is as follows. (Microbial infection) Facilitates HIV-1 replication. Acts as a cofactor for XPO1-mediated nuclear export of HIV-1 Rev RNAs. This function is strongly stimulated in the presence of TBK1 and requires DDX3X ATPase activity. (Microbial infection) Facilitates Zika virus (ZIKV) replication. In terms of biological role, (Microbial infection) Facilitates Dengue virus (DENV) replication. Functionally, (Microbial infection) Facilitates Venezuelan equine encephalitis virus (VEEV) replication. In Homo sapiens (Human), this protein is ATP-dependent RNA helicase DDX3X (DDX3X).